Here is a 99-residue protein sequence, read N- to C-terminus: Protein Tat (99 aa).

The segment at 1–20 is disordered; that stretch reads MELVDPNLDPWNHPGSQPTT. An interaction with human CREBBP region spans residues 1-24; that stretch reads MELVDPNLDPWNHPGSQPTTPCTR. Positions 1–48 are transactivation; that stretch reads MELVDPNLDPWNHPGSQPTTPCTRCYCKWCCFHCYWCFTTKGLGISYG. Cys-22, Cys-25, and Cys-27 together coordinate Zn(2+). The segment at 22-37 is cysteine-rich; that stretch reads CTRCYCKWCCFHCYWC. Lys-28 carries the N6-acetyllysine; by host PCAF modification. Residues Cys-30, His-33, Cys-34, and Cys-37 each contribute to the Zn(2+) site. Residues 38 to 48 are core; that stretch reads FTTKGLGISYG. The interval 48 to 99 is disordered; sequence GRKKRRQRPRTPQSSQIHQDFVPKQPISQARGNPTGPKESKKEVESKAKTDP. Positions 49–57 match the Nuclear localization signal, RNA-binding (TAR), and protein transduction motif; the sequence is RKKRRQRPR. An interaction with the host capping enzyme RNGTT region spans residues 49–86; that stretch reads RKKRRQRPRTPQSSQIHQDFVPKQPISQARGNPTGPKE. Residues Lys-50 and Lys-51 each carry the N6-acetyllysine; by host EP300 and GCN5L2 modification. Asymmetric dimethylarginine; by host PRMT6 is present on residues Arg-52 and Arg-53. Residue Lys-71 forms a Glycyl lysine isopeptide (Lys-Gly) (interchain with G-Cter in ubiquitin) linkage. The span at 85–99 shows a compositional bias: basic and acidic residues; the sequence is KESKKEVESKAKTDP.

This sequence belongs to the lentiviruses Tat family. As to quaternary structure, interacts with host CCNT1. Associates with the P-TEFb complex composed at least of Tat, P-TEFb (CDK9 and CCNT1), TAR RNA, RNA Pol II. Recruits the HATs CREBBP, TAF1/TFIID, EP300, PCAF and GCN5L2. Interacts with host KAT5/Tip60; this interaction targets the latter to degradation. Interacts with the host deacetylase SIRT1. Interacts with host capping enzyme RNGTT; this interaction stimulates RNGTT. Binds to host KDR, and to the host integrins ITGAV/ITGB3 and ITGA5/ITGB1. Interacts with host KPNB1/importin beta-1 without previous binding to KPNA1/importin alpha-1. Interacts with EIF2AK2. Interacts with host nucleosome assembly protein NAP1L1; this interaction may be required for the transport of Tat within the nucleus, since the two proteins interact at the nuclear rim. Interacts with host C1QBP/SF2P32; this interaction involves lysine-acetylated Tat. Interacts with the host chemokine receptors CCR2, CCR3 and CXCR4. Interacts with host DPP4/CD26; this interaction may trigger an anti-proliferative effect. Interacts with host LDLR. Interacts with the host extracellular matrix metalloproteinase MMP1. Interacts with host PRMT6; this interaction mediates Tat's methylation. Interacts with, and is ubiquitinated by MDM2/Hdm2. Interacts with host PSMC3 and HTATIP2. Interacts with STAB1; this interaction may overcome SATB1-mediated repression of IL2 and IL2RA (interleukin) in T cells by binding to the same domain than HDAC1. Interacts (when acetylated) with human CDK13, thereby increasing HIV-1 mRNA splicing and promoting the production of the doubly spliced HIV-1 protein Nef. Interacts with host TBP; this interaction modulates the activity of transcriptional pre-initiation complex. Interacts with host RELA. Interacts with host PLSCR1; this interaction negatively regulates Tat transactivation activity by altering its subcellular distribution. Post-translationally, asymmetrical arginine methylation by host PRMT6 seems to diminish the transactivation capacity of Tat and affects the interaction with host CCNT1. In terms of processing, acetylation by EP300, CREBBP, GCN5L2/GCN5 and PCAF regulates the transactivation activity of Tat. EP300-mediated acetylation of Lys-50 promotes dissociation of Tat from the TAR RNA through the competitive binding to PCAF's bromodomain. In addition, the non-acetylated Tat's N-terminus can also interact with PCAF. PCAF-mediated acetylation of Lys-28 enhances Tat's binding to CCNT1. Lys-50 is deacetylated by SIRT1. Polyubiquitination by host MDM2 does not target Tat to degradation, but activates its transactivation function and fosters interaction with CCNT1 and TAR RNA. Post-translationally, phosphorylated by EIF2AK2 on serine and threonine residues adjacent to the basic region important for TAR RNA binding and function. Phosphorylation of Tat by EIF2AK2 is dependent on the prior activation of EIF2AK2 by dsRNA.

The protein resides in the host nucleus. The protein localises to the host nucleolus. It localises to the host cytoplasm. It is found in the secreted. Its function is as follows. Transcriptional activator that increases RNA Pol II processivity, thereby increasing the level of full-length viral transcripts. Recognizes a hairpin structure at the 5'-LTR of the nascent viral mRNAs referred to as the transactivation responsive RNA element (TAR) and recruits the cyclin T1-CDK9 complex (P-TEFb complex) that will in turn hyperphosphorylate the RNA polymerase II to allow efficient elongation. The CDK9 component of P-TEFb and other Tat-activated kinases hyperphosphorylate the C-terminus of RNA Pol II that becomes stabilized and much more processive. Other factors such as HTATSF1/Tat-SF1, SUPT5H/SPT5, and HTATIP2 are also important for Tat's function. Besides its effect on RNA Pol II processivity, Tat induces chromatin remodeling of proviral genes by recruiting the histone acetyltransferases (HATs) CREBBP, EP300 and PCAF to the chromatin. This also contributes to the increase in proviral transcription rate, especially when the provirus integrates in transcriptionally silent region of the host genome. To ensure maximal activation of the LTR, Tat mediates nuclear translocation of NF-kappa-B by interacting with host RELA. Through its interaction with host TBP, Tat may also modulate transcription initiation. Tat can reactivate a latently infected cell by penetrating in it and transactivating its LTR promoter. In the cytoplasm, Tat is thought to act as a translational activator of HIV-1 mRNAs. In terms of biological role, extracellular circulating Tat can be endocytosed by surrounding uninfected cells via the binding to several surface receptors such as CD26, CXCR4, heparan sulfate proteoglycans (HSPG) or LDLR. Neurons are rarely infected, but they internalize Tat via their LDLR. Through its interaction with nuclear HATs, Tat is potentially able to control the acetylation-dependent cellular gene expression. Modulates the expression of many cellular genes involved in cell survival, proliferation or in coding for cytokines or cytokine receptors. Tat plays a role in T-cell and neurons apoptosis. Tat induced neurotoxicity and apoptosis probably contribute to neuroAIDS. Circulating Tat also acts as a chemokine-like and/or growth factor-like molecule that binds to specific receptors on the surface of the cells, affecting many cellular pathways. In the vascular system, Tat binds to ITGAV/ITGB3 and ITGA5/ITGB1 integrins dimers at the surface of endothelial cells and competes with bFGF for heparin-binding sites, leading to an excess of soluble bFGF. The polypeptide is Protein Tat (Homo sapiens (Human)).